Here is a 221-residue protein sequence, read N- to C-terminus: Orotate phosphoribosyltransferase (221 aa).

Lys-26 provides a ligand contact to 5-phospho-alpha-D-ribose 1-diphosphate. 34–35 (FF) serves as a coordination point for orotate. Residues 72 to 73 (YK), Arg-99, Lys-100, Lys-103, His-105, and 124 to 132 (DDVITAGTA) each bind 5-phospho-alpha-D-ribose 1-diphosphate. Orotate is bound by residues Thr-128 and Arg-156.

It belongs to the purine/pyrimidine phosphoribosyltransferase family. PyrE subfamily. Homodimer. Mg(2+) serves as cofactor.

The enzyme catalyses orotidine 5'-phosphate + diphosphate = orotate + 5-phospho-alpha-D-ribose 1-diphosphate. Its pathway is pyrimidine metabolism; UMP biosynthesis via de novo pathway; UMP from orotate: step 1/2. Catalyzes the transfer of a ribosyl phosphate group from 5-phosphoribose 1-diphosphate to orotate, leading to the formation of orotidine monophosphate (OMP). The polypeptide is Orotate phosphoribosyltransferase (Colwellia psychrerythraea (strain 34H / ATCC BAA-681) (Vibrio psychroerythus)).